Consider the following 189-residue polypeptide: Thymidine kinase (189 aa).

ATP contacts are provided by residues 9 to 16 and 85 to 88; these read GTMNSGKT and DESQ. Residue Glu86 is the Proton acceptor of the active site. Zn(2+)-binding residues include Cys143, Cys146, Cys180, and His183.

It belongs to the thymidine kinase family. In terms of assembly, homotetramer.

The protein resides in the cytoplasm. It catalyses the reaction thymidine + ATP = dTMP + ADP + H(+). The sequence is that of Thymidine kinase from Streptococcus pyogenes serotype M3 (strain ATCC BAA-595 / MGAS315).